The sequence spans 670 residues: MSYLSVGDEVLIRGELGIVRFAGSTDFESGIWLGVELLNGKGKNDGSVKGKRYFSCEKGKGIFVRACSSNVMKRPSVVKSRKKGSENISNFMEKTKAIKQKSRREPSKFERSLARPLCITPIDSSTPTKTATFYTSSTTENLDELNFSTEELSSFDTTLLNSDTSKLSGLDDSSFMEEEFVWQVDNVLQECEKKFTPHSKGSYLKENLKSELRKGRLDELMCENTALKEKIDKLNKELEKVEPQLTFLRSKNSIEKPRNFRREKFLKKFLAMQKEIKYLRKRKLQIRKIPNYKYSDRSLNSKTPKSQDNWTTQVTPSSLLGVSEVSKVLQLKQVQVDITELVKIPKNPFSEKLTISNVNRYLNIVPGSLDLQFSLTNENFVHWNSTVYQELLNLKSNNSSVDGVKTRRQLLEENALLSHKVLKLTEEIQDLETLNQLNTEIEARQSEKLNEVQEETQRLSQLLISSQPALTEVKHLKLCLSDSQEELLQLNAKLEKANIVIDELNSAKLKLSKQVEEESSMKDDLTEMNQRLKEQIESYENEVNSEITSRTLKEFETLKTQYEKNLCNLREQLKTARMKLADKYPQGDNTSENIDWLKHSLRDSNTENSIPSPLTFACKEIRKLVADIKPVSVEKQLALNWKKDIERPSFHHNQQLFNYCQLTDILSKKC.

In terms of domain architecture, CAP-Gly spans 23-65; sequence GSTDFESGIWLGVELLNGKGKNDGSVKGKRYFSCEKGKGIFVR. Coiled-coil stretches lie at residues 209 to 254 and 404 to 582; these read KSEL…KNSI and VKTR…KLAD. Residue Ser-460 is modified to Phosphoserine. Position 606 is a phosphothreonine (Thr-606).

It localises to the cytoplasm. The protein localises to the cytoskeleton. The protein resides in the spindle. Binds to nuclear microtubules with the effect of either modifying their structure or function. This then promotes meiotic nuclear division. In Schizosaccharomyces pombe (strain 972 / ATCC 24843) (Fission yeast), this protein is Microtubule-associated protein ssm4 (ssm4).